The sequence spans 97 residues: UPF0235 protein HAPS_1504 (97 aa).

Belongs to the UPF0235 family.

The sequence is that of UPF0235 protein HAPS_1504 from Glaesserella parasuis serovar 5 (strain SH0165) (Haemophilus parasuis).